The sequence spans 103 residues: Toluene-4-monooxygenase system, effector component (103 aa).

Belongs to the TmoD/XamoD family. In terms of assembly, the alkene monooxygenase multicomponent enzyme system is composed of an electron transfer component and a monooxygenase component interacting with the effector protein TmoD. The electron transfer component is composed of a ferredoxin reductase (TmoF) and a ferredoxin (TmoC), and the monooxygenase component is formed by a heterohexamer (dimer of heterotrimers) of two alpha subunits (TmoA), two beta subunits (TmoE) and two gamma subunits (TmoB).

It participates in xenobiotic degradation; toluene degradation. Effector component of the toluene-4-monooxygenase multicomponent enzyme system which catalyzes the O2- and NADH-dependent hydroxylation of toluene to form p-cresol. Required for optimal efficiency and specificity of the holoenzyme. The polypeptide is Toluene-4-monooxygenase system, effector component (Ectopseudomonas mendocina (Pseudomonas mendocina)).